The sequence spans 132 residues: UPF0299 membrane protein YohJ (132 aa).

The next 4 helical transmembrane spans lie at 7-27, 31-51, 63-83, and 93-113; these read IIWQYIRAFVLIYACLYAGIF, LLPITIPGSIIGMLILFVLLA, GCYVLIRYMALLFVPIGVGVM, and FGPVVVSCAISTLVVFVVVSW.

It belongs to the UPF0299 family.

The protein localises to the cell inner membrane. The sequence is that of UPF0299 membrane protein YohJ from Salmonella agona (strain SL483).